The chain runs to 383 residues: ATP phosphoribosyltransferase regulatory subunit (383 aa).

Belongs to the class-II aminoacyl-tRNA synthetase family. HisZ subfamily. As to quaternary structure, heteromultimer composed of HisG and HisZ subunits.

The protein resides in the cytoplasm. It functions in the pathway amino-acid biosynthesis; L-histidine biosynthesis; L-histidine from 5-phospho-alpha-D-ribose 1-diphosphate: step 1/9. Functionally, required for the first step of histidine biosynthesis. May allow the feedback regulation of ATP phosphoribosyltransferase activity by histidine. The polypeptide is ATP phosphoribosyltransferase regulatory subunit (Neisseria meningitidis serogroup C / serotype 2a (strain ATCC 700532 / DSM 15464 / FAM18)).